A 776-amino-acid chain; its full sequence is DNA ligase (776 aa).

Residues 31-35 (DAEYD), 80-81 (SL), and glutamate 112 each bind NAD(+). Lysine 114 acts as the N6-AMP-lysine intermediate in catalysis. Residues arginine 135, glutamate 172, lysine 288, and lysine 312 each coordinate NAD(+). 4 residues coordinate Zn(2+): cysteine 406, cysteine 409, cysteine 436, and cysteine 442. The BRCT domain maps to 693-776 (AEGLPLAGQT…TFLAEQGIAV (84 aa)).

This sequence belongs to the NAD-dependent DNA ligase family. LigA subfamily. Mg(2+) is required as a cofactor. It depends on Mn(2+) as a cofactor.

It catalyses the reaction NAD(+) + (deoxyribonucleotide)n-3'-hydroxyl + 5'-phospho-(deoxyribonucleotide)m = (deoxyribonucleotide)n+m + AMP + beta-nicotinamide D-nucleotide.. In terms of biological role, DNA ligase that catalyzes the formation of phosphodiester linkages between 5'-phosphoryl and 3'-hydroxyl groups in double-stranded DNA using NAD as a coenzyme and as the energy source for the reaction. It is essential for DNA replication and repair of damaged DNA. The polypeptide is DNA ligase (Pseudomonas putida (strain ATCC 47054 / DSM 6125 / CFBP 8728 / NCIMB 11950 / KT2440)).